The primary structure comprises 148 residues: SsrA-binding protein (148 aa).

It belongs to the SmpB family.

Its subcellular location is the cytoplasm. Functionally, required for rescue of stalled ribosomes mediated by trans-translation. Binds to transfer-messenger RNA (tmRNA), required for stable association of tmRNA with ribosomes. tmRNA and SmpB together mimic tRNA shape, replacing the anticodon stem-loop with SmpB. tmRNA is encoded by the ssrA gene; the 2 termini fold to resemble tRNA(Ala) and it encodes a 'tag peptide', a short internal open reading frame. During trans-translation Ala-aminoacylated tmRNA acts like a tRNA, entering the A-site of stalled ribosomes, displacing the stalled mRNA. The ribosome then switches to translate the ORF on the tmRNA; the nascent peptide is terminated with the 'tag peptide' encoded by the tmRNA and targeted for degradation. The ribosome is freed to recommence translation, which seems to be the essential function of trans-translation. The protein is SsrA-binding protein of Azoarcus sp. (strain BH72).